The chain runs to 453 residues: UDP-glycosyltransferase 76E1 (453 aa).

UDP-alpha-D-glucose contacts are provided by residues S272, 331–333, 348–356, and 370–373; these read APQ, HCGWNSTLE, and TGDQ.

This sequence belongs to the UDP-glycosyltransferase family.

Its function is as follows. Possesses low quercetin 3-O-glucosyltransferase and 7-O-glucosyltransferase activities in vitro. This Arabidopsis thaliana (Mouse-ear cress) protein is UDP-glycosyltransferase 76E1 (UGT76E1).